The primary structure comprises 61 residues: Photosystem II reaction center X protein (61 aa).

A helical transmembrane segment spans residues 26–46 (IGSFIAAALLIVIPATAFLIF).

The protein belongs to the PsbX family. Type 2 subfamily. As to quaternary structure, PSII consists of a core antenna complex that captures photons, and an electron transfer chain that converts photonic excitation into a charge separation. PSII forms dimeric complexes.

The protein localises to the cellular thylakoid membrane. Its function is as follows. Involved in the binding and/or turnover of quinones at the Q(B) site of Photosystem II. This Prochlorococcus marinus (strain MIT 9215) protein is Photosystem II reaction center X protein.